A 304-amino-acid chain; its full sequence is Non-specific ribonucleoside hydrolase RihC (304 aa).

His233 is an active-site residue.

Belongs to the IUNH family. RihC subfamily.

Functionally, hydrolyzes both purine and pyrimidine ribonucleosides with a broad-substrate specificity. This is Non-specific ribonucleoside hydrolase RihC from Escherichia coli O139:H28 (strain E24377A / ETEC).